Reading from the N-terminus, the 282-residue chain is Orotidine 5'-phosphate decarboxylase (282 aa).

Catalysis depends on K95, which acts as the Proton donor.

It belongs to the OMP decarboxylase family. Type 2 subfamily.

It carries out the reaction orotidine 5'-phosphate + H(+) = UMP + CO2. It participates in pyrimidine metabolism; UMP biosynthesis via de novo pathway; UMP from orotate: step 2/2. The protein is Orotidine 5'-phosphate decarboxylase of Polaromonas naphthalenivorans (strain CJ2).